The chain runs to 443 residues: Ribosomal protein uS12 methylthiotransferase RimO (443 aa).

In terms of domain architecture, MTTase N-terminal spans proline 5–proline 115. 6 residues coordinate [4Fe-4S] cluster: cysteine 14, cysteine 50, cysteine 79, cysteine 147, cysteine 151, and cysteine 154. A Radical SAM core domain is found at leucine 133–alanine 374. One can recognise a TRAM domain in the interval glutamine 377–tyrosine 443.

It belongs to the methylthiotransferase family. RimO subfamily. The cofactor is [4Fe-4S] cluster.

The protein localises to the cytoplasm. The enzyme catalyses L-aspartate(89)-[ribosomal protein uS12]-hydrogen + (sulfur carrier)-SH + AH2 + 2 S-adenosyl-L-methionine = 3-methylsulfanyl-L-aspartate(89)-[ribosomal protein uS12]-hydrogen + (sulfur carrier)-H + 5'-deoxyadenosine + L-methionine + A + S-adenosyl-L-homocysteine + 2 H(+). In terms of biological role, catalyzes the methylthiolation of an aspartic acid residue of ribosomal protein uS12. This chain is Ribosomal protein uS12 methylthiotransferase RimO, found in Haemophilus ducreyi (strain 35000HP / ATCC 700724).